Reading from the N-terminus, the 214-residue chain is Methyltransferase HEMK2 (214 aa).

The S-adenosyl-L-methionine site is built by Thr-29, Glu-51, Gly-53, Asp-77, Asp-103, Leu-104, and Asn-122. Asn-122 contributes to the a protein binding site.

This sequence belongs to the eukaryotic/archaeal PrmC-related family. Heterodimer; heterodimerization with TRMT112 is required for S-adenosyl-L-methionine-binding. In terms of processing, ubiquitinated, leading to its degradation by the proteasome. As to expression, highly expressed in undifferentiated embryonic stem cells (at protein level). Also expressed in testis and brain, weakly expressed in differentiated embryonic stem cells and kidney. Not expressed in muscle, heart, placenta, pancreas, lung and stomach.

The protein resides in the nucleus. It catalyses the reaction L-lysyl-[histone] + S-adenosyl-L-methionine = N(6)-methyl-L-lysyl-[histone] + S-adenosyl-L-homocysteine + H(+). The enzyme catalyses L-glutaminyl-[protein] + S-adenosyl-L-methionine = N(5)-methyl-L-glutaminyl-[protein] + S-adenosyl-L-homocysteine + H(+). It carries out the reaction methylarsonous acid + S-adenosyl-L-methionine = dimethylarsinate + S-adenosyl-L-homocysteine + 2 H(+). Functionally, methyltransferase that can methylate proteins and, to a lower extent, arsenic. Catalytic subunit of a heterodimer with TRMT112, which monomethylates 'Lys-12' of histone H4 (H4K12me1), a modification present at the promoters of numerous genes encoding cell cycle regulators. Catalytic subunit of a heterodimer with TRMT112, which catalyzes N5-methylation of Glu residue of proteins with a Gly-Gln-Xaa-Xaa-Xaa-Arg motif. Methylates ETF1 on 'Gln-185'; ETF1 needs to be complexed to ERF3 in its GTP-bound form to be efficiently methylated. May also play a role in the modulation of arsenic-induced toxicity by mediating the conversion of monomethylarsonous acid (3+) into the less toxic dimethylarsonic acid. It however only plays a limited role in arsenic metabolism compared with AS3MT. The protein is Methyltransferase HEMK2 of Mus musculus (Mouse).